Reading from the N-terminus, the 101-residue chain is Small ribosomal subunit protein uS14 (101 aa).

Residues 36–61 (ASAEDRRAARQKLQSLPRNSSPVRQR) are disordered. Residues 47-59 (KLQSLPRNSSPVR) are compositionally biased toward polar residues.

The protein belongs to the universal ribosomal protein uS14 family. As to quaternary structure, part of the 30S ribosomal subunit. Contacts proteins S3 and S10.

Binds 16S rRNA, required for the assembly of 30S particles and may also be responsible for determining the conformation of the 16S rRNA at the A site. The sequence is that of Small ribosomal subunit protein uS14 from Methylobacillus flagellatus (strain ATCC 51484 / DSM 6875 / VKM B-1610 / KT).